We begin with the raw amino-acid sequence, 340 residues long: N-acetyl-gamma-glutamyl-phosphate reductase (340 aa).

The active site involves cysteine 151.

The protein belongs to the NAGSA dehydrogenase family. Type 1 subfamily.

Its subcellular location is the cytoplasm. The enzyme catalyses N-acetyl-L-glutamate 5-semialdehyde + phosphate + NADP(+) = N-acetyl-L-glutamyl 5-phosphate + NADPH + H(+). It participates in amino-acid biosynthesis; L-arginine biosynthesis; N(2)-acetyl-L-ornithine from L-glutamate: step 3/4. Its function is as follows. Catalyzes the NADPH-dependent reduction of N-acetyl-5-glutamyl phosphate to yield N-acetyl-L-glutamate 5-semialdehyde. The sequence is that of N-acetyl-gamma-glutamyl-phosphate reductase from Aquifex aeolicus (strain VF5).